A 373-amino-acid polypeptide reads, in one-letter code: Leucine aminopeptidase 1 (373 aa).

Positions 1–18 (MKFISVLALGATATSVLG) are cleaved as a signal peptide. H176 and D195 together coordinate Zn(2+). Residue N196 is glycosylated (N-linked (GlcNAc...) asparagine). Zn(2+) contacts are provided by E234 and D261. N286 carries N-linked (GlcNAc...) asparagine glycosylation. Residues C310 and C314 are joined by a disulfide bond. Residue H343 participates in Zn(2+) binding.

The protein belongs to the peptidase M28 family. M28E subfamily. Monomer. Zn(2+) is required as a cofactor.

It localises to the secreted. Its function is as follows. Extracellular aminopeptidase which contributes to pathogenicity. The sequence is that of Leucine aminopeptidase 1 (LAP1) from Arthroderma otae (strain ATCC MYA-4605 / CBS 113480) (Microsporum canis).